The chain runs to 219 residues: uncharacterized protein (219 aa).

Residues 57–158 (QLEHMTRAAM…LSEASRQTLL (102 aa)) enclose the HD domain.

This is an uncharacterized protein from Acanthamoeba polyphaga mimivirus (APMV).